The chain runs to 499 residues: Alpha-L-arabinofuranosidase B (499 aa).

The first 17 residues, 1 to 17, serve as a signal peptide directing secretion; that stretch reads MFSRRNLLALGLAATVS. Residues 18–335 are catalytic; the sequence is AGPCDIYEAG…ENIVAAKYVV (318 aa). 3 cysteine pairs are disulfide-bonded: C21/C31, C81/C86, and C176/C177. N83 is a glycosylation site (N-linked (GlcNAc...) asparagine). N202 is a glycosylation site (N-linked (GlcNAc...) asparagine). D219 contributes to the substrate binding site. The Nucleophile role is filled by E221. Substrate-binding residues include N222, N223, and G296. The Proton donor role is filled by D297. The tract at residues 336 to 499 is ABD; it reads GSLVSGPSFT…SFEIETAFAS (164 aa). Cysteines 401 and 439 form a disulfide. Substrate-binding residues include H416, N418, F419, D435, H463, E465, L468, and D488.

Belongs to the glycosyl hydrolase 54 family.

It is found in the secreted. The catalysed reaction is Hydrolysis of terminal non-reducing alpha-L-arabinofuranoside residues in alpha-L-arabinosides.. It participates in glycan metabolism; L-arabinan degradation. Its function is as follows. Alpha-L-arabinofuranosidase involved in the degradation of arabinoxylan, a major component of plant hemicellulose. Able to hydrolyze 1,5-, 1,3- and 1,2-alpha-linkages not only in L-arabinofuranosyl oligosaccharides, but also in polysaccharides containing terminal non-reducing L-arabinofuranoses in side chains, like L-arabinan, arabinogalactan and arabinoxylan. In Aspergillus kawachii (strain NBRC 4308) (White koji mold), this protein is Alpha-L-arabinofuranosidase B (abfB).